Here is a 1883-residue protein sequence, read N- to C-terminus: Zinc finger protein 106 (1883 aa).

Residues Ile-6 and Lys-37 each participate in a glycyl lysine isopeptide (Lys-Gly) (interchain with G-Cter in SUMO2) cross-link. The segment at 20-44 (HECRVCGVTEVGLSAYAKHISGQLH) adopts a C2H2-type 1; atypical zinc-finger fold. Residues 39–162 (ISGQLHKDNV…NGGGPRGRSG (124 aa)) form a disordered region. The span at 52 to 67 (EREDDGKGEEEEEDYF) shows a compositional bias: acidic residues. Residues Lys-69 and Lys-76 each participate in a glycyl lysine isopeptide (Lys-Gly) (interchain with G-Cter in SUMO2) cross-link. Composition is skewed to basic and acidic residues over residues 77–86 (QRKEQSRQDE), 96–116 (SDDR…DRES), and 128–138 (PQRDWKWEKDG). A Glycyl lysine isopeptide (Lys-Gly) (interchain with G-Cter in SUMO2) cross-link involves residue Lys-133. Residues 139-148 (FNNTRKNSFP) show a composition bias toward polar residues. Glycyl lysine isopeptide (Lys-Gly) (interchain with G-Cter in SUMO2) cross-links involve residues Lys-243, Lys-287, and Lys-305. A compositionally biased stretch (polar residues) spans 322 to 338 (QTTKQADTATSKVSGKN). The interval 322-356 (QTTKQADTATSKVSGKNGSAAREKPRRWTPYPSQK) is disordered. Glycyl lysine isopeptide (Lys-Gly) (interchain with G-Cter in SUMO2) cross-links involve residues Lys-356, Lys-365, Lys-371, and Lys-417. The disordered stretch occupies residues 389-423 (IQEPQTDETRNSPTQKTQKEIHTGSLNHKASSDSA). Over residues 412-423 (GSLNHKASSDSA) the composition is skewed to polar residues. A Phosphoserine modification is found at Ser-422. Residues Lys-451, Lys-461, Lys-477, Lys-492, Lys-505, Lys-515, Lys-525, Lys-539, and Lys-557 each participate in a glycyl lysine isopeptide (Lys-Gly) (interchain with G-Cter in SUMO2) cross-link. Positions 457–501 (CPATKSLSQKQDPKNISKNTKTNFFSPGEHSNPSNKPTVEDNHGP) are disordered. The span at 461–493 (KSLSQKQDPKNISKNTKTNFFSPGEHSNPSNKP) shows a compositional bias: polar residues. The tract at residues 586–637 (LEDESDGETSDTEKHGTKIGTLGSATTELLSGSTRTADEKEEDDRILKTSRE) is disordered. Ser-590 is subject to Phosphoserine. Lys-603 participates in a covalent cross-link: Glycyl lysine isopeptide (Lys-Gly) (interchain with G-Cter in SUMO2). A compositionally biased stretch (polar residues) spans 608–620 (GSATTELLSGSTR). 2 positions are modified to phosphoserine: Ser-641 and Ser-661. Residues Lys-671, Lys-684, Lys-705, Lys-721, Lys-741, Lys-775, and Lys-807 each participate in a glycyl lysine isopeptide (Lys-Gly) (interchain with G-Cter in SUMO2) cross-link. A phosphoserine mark is found at Ser-859, Ser-861, Ser-864, and Ser-893. The segment at 879–945 (EEGTGKENEP…HSAQLSSDHI (67 aa)) is disordered. A compositionally biased stretch (polar residues) spans 888 to 906 (PQQMVSPSNSLRAGQSQKA). Glycyl lysine isopeptide (Lys-Gly) (interchain with G-Cter in SUMO2) cross-links involve residues Lys-905 and Lys-911. Phosphoserine is present on Ser-937. Lys-953 participates in a covalent cross-link: Glycyl lysine isopeptide (Lys-Gly) (interchain with G-Cter in SUMO2). The segment covering 958-976 (QERSIPPSENQNSQESNGE) has biased composition (polar residues). Disordered stretches follow at residues 958 to 982 (QERS…CLSS), 997 to 1048 (ATDS…KERS), 1121 to 1140 (EPSE…RRNS), and 1182 to 1218 (PTFQ…VPPS). Position 1021 is a phosphothreonine (Thr-1021). 3 positions are modified to phosphoserine: Ser-1025, Ser-1026, and Ser-1031. A compositionally biased stretch (basic residues) spans 1035–1045 (KNKRRKIKGKK). Ser-1249 is subject to Phosphoserine. The interval 1252–1483 (ESTESFHEPS…EVSSTSEIGT (232 aa)) is disordered. Residues 1255–1277 (ESFHEPSQELKFSVEQRNTRNRE) are compositionally biased toward basic and acidic residues. A Glycyl lysine isopeptide (Lys-Gly) (interchain with G-Cter in SUMO2) cross-link involves residue Lys-1265. Composition is skewed to polar residues over residues 1278-1291 (NSPS…SSIN) and 1299-1312 (KGNS…SSFL). A phosphoserine mark is found at Ser-1279, Ser-1281, and Ser-1284. Lys-1299 is covalently cross-linked (Glycyl lysine isopeptide (Lys-Gly) (interchain with G-Cter in SUMO2)). Ser-1302 is subject to Phosphoserine. Residue Lys-1324 forms a Glycyl lysine isopeptide (Lys-Gly) (interchain with G-Cter in SUMO2) linkage. Ser-1328 carries the phosphoserine modification. Over residues 1333–1346 (PEQQAESTLTSAET) the composition is skewed to polar residues. Residues 1349 to 1362 (SKKKKKLRKKKSLR) are compositionally biased toward basic residues. Residue Ser-1370 is modified to Phosphoserine. The residue at position 1372 (Thr-1372) is a Phosphothreonine. Glycyl lysine isopeptide (Lys-Gly) (interchain with G-Cter in SUMO2) cross-links involve residues Lys-1380, Lys-1392, and Lys-1395. Composition is skewed to basic and acidic residues over residues 1402–1416 (EDSR…VRDE) and 1444–1456 (GEEK…KKDI). Residue Lys-1454 forms a Glycyl lysine isopeptide (Lys-Gly) (interchain with G-Cter in SUMO2) linkage. The segment covering 1457–1481 (WNSTEQNPLETSRSGCDEVSSTSEI) has biased composition (polar residues). Ser-1468 carries the post-translational modification Phosphoserine. Glycyl lysine isopeptide (Lys-Gly) (interchain with G-Cter in SUMO2) cross-links involve residues Lys-1486 and Lys-1504. Over residues 1502–1513 (SIKGSKNSSEIS) the composition is skewed to polar residues. The segment at 1502–1527 (SIKGSKNSSEISSEPGDDDEPTEGSF) is disordered. WD repeat units lie at residues 1529 to 1568 (GHQA…GVFE), 1570 to 1611 (HTSK…CVEQ), 1654 to 1695 (HGPR…LLRT), 1698 to 1737 (GHSK…RIYK), 1738 to 1775 (GHNH…RLQV), and 1778 to 1815 (GHKD…NYRC). A Glycyl lysine isopeptide (Lys-Gly) (interchain with G-Cter in SUMO2) cross-link involves residue Lys-1585. Lys-1737 is covalently cross-linked (Glycyl lysine isopeptide (Lys-Gly) (interchain with G-Cter in SUMO2)). The C2H2-type 2; atypical zinc-finger motif lies at 1813–1838 (YRCWWHGCSLIFGVVDHLKQHLLTDH). Lys-1864 participates in a covalent cross-link: Glycyl lysine isopeptide (Lys-Gly) (interchain with G-Cter in SUMO2).

As to quaternary structure, interacts with KNOP1. Interacts with TARDBP and NUP107. Interacts (via N-terminus) with RBM39. Interacts with the SH3 domains of FYN and GRB2. Post-translationally, phosphorylated by FYN in vitro.

The protein resides in the nucleus. Its subcellular location is the nucleolus. It localises to the nucleus speckle. Its function is as follows. RNA-binding protein. Specifically binds to 5'-GGGGCC-3' sequence repeats in RNA. Essential for maintenance of peripheral motor neuron and skeletal muscle function. Required for normal expression and/or alternative splicing of a number of genes in spinal cord and skeletal muscle, including the neurite outgrowth inhibitor RTN4. Also contributes to normal mitochondrial respiratory function in motor neurons, via an unknown mechanism. In Homo sapiens (Human), this protein is Zinc finger protein 106 (ZNF106).